We begin with the raw amino-acid sequence, 122 residues long: Large ribosomal subunit protein uL18 (122 aa).

A compositionally biased stretch (basic and acidic residues) spans 1-11 (MLKKPDRNALR). The interval 1-22 (MLKKPDRNALRDKRRRRVRKKI) is disordered. The span at 12–22 (DKRRRRVRKKI) shows a compositional bias: basic residues.

The protein belongs to the universal ribosomal protein uL18 family. As to quaternary structure, part of the 50S ribosomal subunit; part of the 5S rRNA/L5/L18/L25 subcomplex. Contacts the 5S and 23S rRNAs.

In terms of biological role, this is one of the proteins that bind and probably mediate the attachment of the 5S RNA into the large ribosomal subunit, where it forms part of the central protuberance. This is Large ribosomal subunit protein uL18 from Pelotomaculum thermopropionicum (strain DSM 13744 / JCM 10971 / SI).